The following is a 901-amino-acid chain: HTH-type transcriptional regulator MalT (901 aa).

39–46 (SPAGYGKT) lines the ATP pocket. Positions 829-894 (ELIRTSPLTQ…AAVQHAQKLL (66 aa)) constitute an HTH luxR-type domain. A DNA-binding region (H-T-H motif) is located at residues 853–872 (NEQIAGELEVAATTIKTHIR).

It belongs to the MalT family. Monomer in solution. Oligomerizes to an active state in the presence of the positive effectors ATP and maltotriose.

With respect to regulation, activated by ATP and maltotriose, which are both required for DNA binding. Positively regulates the transcription of the maltose regulon whose gene products are responsible for uptake and catabolism of malto-oligosaccharides. Specifically binds to the promoter region of its target genes, recognizing a short DNA motif called the MalT box. The polypeptide is HTH-type transcriptional regulator MalT (Escherichia coli O139:H28 (strain E24377A / ETEC)).